Consider the following 332-residue polypeptide: Phosphate acyltransferase (332 aa).

This sequence belongs to the PlsX family. Homodimer. Probably interacts with PlsY.

It is found in the cytoplasm. It catalyses the reaction a fatty acyl-[ACP] + phosphate = an acyl phosphate + holo-[ACP]. It functions in the pathway lipid metabolism; phospholipid metabolism. Its function is as follows. Catalyzes the reversible formation of acyl-phosphate (acyl-PO(4)) from acyl-[acyl-carrier-protein] (acyl-ACP). This enzyme utilizes acyl-ACP as fatty acyl donor, but not acyl-CoA. This Oceanobacillus iheyensis (strain DSM 14371 / CIP 107618 / JCM 11309 / KCTC 3954 / HTE831) protein is Phosphate acyltransferase.